A 473-amino-acid polypeptide reads, in one-letter code: GTPase Der (473 aa).

EngA-type G domains follow at residues 5–170 (PVVA…PEDV) and 178–351 (LKLA…ASSM). GTP-binding positions include 11-18 (GRPNVGKS), 58-62 (DTGGI), 123-126 (NKID), 184-191 (GRPNVGKS), 231-235 (DTAGV), and 296-299 (NKWD). Positions 352 to 436 (FKVSTNRLTQ…PLKVEFKLNT (85 aa)) constitute a KH-like domain. A disordered region spans residues 438 to 473 (PYAGKKTTSSKKLRPGVSEARQKRRNMKYKKGSHKK). Positions 459-473 (QKRRNMKYKKGSHKK) are enriched in basic residues.

Belongs to the TRAFAC class TrmE-Era-EngA-EngB-Septin-like GTPase superfamily. EngA (Der) GTPase family. In terms of assembly, associates with the 50S ribosomal subunit.

Functionally, GTPase that plays an essential role in the late steps of ribosome biogenesis. The chain is GTPase Der from Psychrobacter sp. (strain PRwf-1).